The sequence spans 628 residues: 69 kDa protein (628 aa).

5 disordered regions span residues 1-25 (MSNGLPISIGRPCTHDSQRSLSAPN), 141-332 (HFHA…FRPS), 347-398 (GHLE…HRRS), 418-507 (RGKI…RRTF), and 535-628 (QTVL…PDTD). Residues 299 to 312 (PPTTTSRPTGPPSR) are compositionally biased toward low complexity. Polar residues predominate over residues 320-331 (YQSSPHTPNFRP). The span at 434-450 (GAPPPPRRLPSPAPHPQ) shows a compositional bias: pro residues. Residues 497 to 507 (TEVHAPERRTF) show a composition bias toward basic and acidic residues.

Belongs to the tymoviridae protein p69 family.

Its function is as follows. Acts as a suppressor of RNA-mediated gene silencing, also known as post-transcriptional gene silencing (PTGS), a mechanism of plant viral defense that limits the accumulation of viral RNAs. The polypeptide is 69 kDa protein (Brassica).